Consider the following 734-residue polypeptide: ATP-dependent RNA helicase SUV3L, mitochondrial (734 aa).

A mitochondrion-targeting transit peptide spans 1–60 (MAAAAAIAAALLRRSTSSQHHRRILLLPLLSHLQRAAPRSPSPWDPPPHHRFFFSSDVTA). Positions 58-88 (VTAEGDSKPRPPLDGKQLWREVSTSEPATGA) are disordered. Basic and acidic residues predominate over residues 62-76 (GDSKPRPPLDGKQLW). The Helicase ATP-binding domain occupies 198-356 (FARAMRRRVV…RFKPLVVEAK (159 aa)). 211-218 (GPTNSGKT) lines the ATP pocket. A Helicase C-terminal domain is found at 357-525 (TLLGDLKNVR…SFAIQFPDLT (169 aa)). N-linked (GlcNAc...) asparagine glycans are attached at residues Asn594 and Asn614. The segment at 667–734 (ASWKPTSRQQ…QDPSSLNFVA (68 aa)) is disordered. Residues 684–693 (EEDNDVEQAS) are compositionally biased toward acidic residues. Residues 695-709 (DNAKNDSEDGYERSI) are compositionally biased toward basic and acidic residues. An N-linked (GlcNAc...) asparagine glycan is attached at Asn699. Polar residues predominate over residues 725–734 (QDPSSLNFVA).

Belongs to the helicase family. Homodimer; in free form. Component of the mitochondrial degradosome (mtEXO) complex which is a heteropentamer containing 2 copies of SUPV3L1 and 3 copies of PNPT1. It depends on Mg(2+) as a cofactor. Mn(2+) is required as a cofactor.

It localises to the nucleus. The protein localises to the mitochondrion matrix. Its subcellular location is the mitochondrion nucleoid. The catalysed reaction is ATP + H2O = ADP + phosphate + H(+). Its function is as follows. Major helicase player in mitochondrial RNA metabolism. Component of the mitochondrial degradosome (mtEXO) complex, that degrades 3' overhang double-stranded RNA with a 3'-to-5' directionality in an ATP-dependent manner. ATPase and ATP-dependent multisubstrate helicase, able to unwind double-stranded (ds) DNA and RNA, and RNA/DNA heteroduplexes in the 5'-to-3' direction. Plays a role in the RNA surveillance system in mitochondria; regulates the stability of mature mRNAs, the removal of aberrantly formed mRNAs and the rapid degradation of non coding processing intermediates. Confers salinity and drought stress tolerances by maintaining both photosynthesis and antioxidant machinery, probably via an increase in plant hormones levels such as gibberellic acid (GA(3)), the cytokinin zeatin (Z) and indole-3-acetic acid (IAA). The protein is ATP-dependent RNA helicase SUV3L, mitochondrial of Oryza sativa subsp. japonica (Rice).